The following is an 82-amino-acid chain: Polyketide biosynthesis acyl-carrier-protein AcpK (82 aa).

Positions Gln4–Val79 constitute a Carrier domain. At Ser39 the chain carries O-(pantetheine 4'-phosphoryl)serine.

In terms of processing, 4'-phosphopantetheine is transferred from CoA to a specific serine of apo-ACP by sfp.

Its subcellular location is the cytoplasm. The protein operates within antibiotic biosynthesis; bacillaene biosynthesis. Its function is as follows. Involved in some intermediate steps for the synthesis of the antibiotic polyketide bacillaene which is involved in secondary metabolism. The protein is Polyketide biosynthesis acyl-carrier-protein AcpK (acpK) of Bacillus subtilis (strain 168).